Consider the following 291-residue polypeptide: D-alanine--D-alanine ligase (291 aa).

The ATP-grasp domain maps to 99–291 (KRIVKSLGIN…FKKLISIIIT (193 aa)). Residue 125–179 (EWNKFPAVVKPVREGSSVGLKIVESLEELKEYALDLLKKTERVMVEEFVEGRDMT) participates in ATP binding. Residues Asp-245, Glu-258, and Asn-260 each coordinate Mg(2+).

The protein belongs to the D-alanine--D-alanine ligase family. Mg(2+) is required as a cofactor. It depends on Mn(2+) as a cofactor.

It is found in the cytoplasm. It catalyses the reaction 2 D-alanine + ATP = D-alanyl-D-alanine + ADP + phosphate + H(+). Its pathway is cell wall biogenesis; peptidoglycan biosynthesis. Cell wall formation. The protein is D-alanine--D-alanine ligase of Aquifex aeolicus (strain VF5).